Consider the following 879-residue polypeptide: Valine--tRNA ligase (879 aa).

The short motif at 43–53 (PNVTGVLHMGH) is the 'HIGH' region element. Residues 534 to 538 (KMSKS) carry the 'KMSKS' region motif. Lys537 lines the ATP pocket. Residues 807-878 (LGNMIDVEAE…LKESIAALKK (72 aa)) are a coiled coil.

The protein belongs to the class-I aminoacyl-tRNA synthetase family. ValS type 1 subfamily. In terms of assembly, monomer.

It is found in the cytoplasm. It carries out the reaction tRNA(Val) + L-valine + ATP = L-valyl-tRNA(Val) + AMP + diphosphate. Functionally, catalyzes the attachment of valine to tRNA(Val). As ValRS can inadvertently accommodate and process structurally similar amino acids such as threonine, to avoid such errors, it has a 'posttransfer' editing activity that hydrolyzes mischarged Thr-tRNA(Val) in a tRNA-dependent manner. This chain is Valine--tRNA ligase, found in Bacteroides thetaiotaomicron (strain ATCC 29148 / DSM 2079 / JCM 5827 / CCUG 10774 / NCTC 10582 / VPI-5482 / E50).